Reading from the N-terminus, the 434-residue chain is Alpha-enolase (434 aa).

S2 is subject to N-acetylserine. K5 is modified (N6-acetyllysine). Residue S27 is modified to Phosphoserine. Position 40 (S40) interacts with Mg(2+). Y44 bears the Phosphotyrosine mark. K60 carries the N6-acetyllysine; alternate modification. An N6-succinyllysine; alternate modification is found at K60. An N6-acetyllysine mark is found at K64 and K71. At K89 the chain carries N6-acetyllysine; alternate. Residue K89 is modified to N6-succinyllysine; alternate. Residues K92 and K126 each carry the N6-acetyllysine modification. Substrate is bound by residues H158 and E167. 2 positions are modified to N6-acetyllysine: K193 and K199. K202 bears the N6-acetyllysine; alternate mark. A Glycyl lysine isopeptide (Lys-Gly) (interchain with G-Cter in SUMO2); alternate cross-link involves residue K202. Residue E210 is the Proton donor of the active site. An N6-acetyllysine; alternate mark is found at K228 and K233. N6-succinyllysine; alternate is present on K228. Position 228 is an N6-(2-hydroxyisobutyryl)lysine; alternate (K228). K233 is modified (N6-malonyllysine; alternate). A Mg(2+)-binding site is contributed by D245. Phosphoserine is present on S254. Residue K256 is modified to N6-acetyllysine. Residues S263 and S272 each carry the phosphoserine modification. K281 carries the post-translational modification N6-acetyllysine; alternate. K281 is subject to N6-(2-hydroxyisobutyryl)lysine; alternate. Position 285 is an N6-acetyllysine (K285). Y287 carries the phosphotyrosine modification. S291 bears the Phosphoserine mark. Mg(2+)-binding residues include E293 and D318. 2 residues coordinate substrate: E293 and D318. Residues K335 and K343 each carry the N6-acetyllysine modification. The active-site Proton acceptor is the K343. Substrate is bound by residues 370-373 (SHRS) and K394. The segment at 405–434 (AKYNQLLRIEEELGSKAKFAGRNFRNPLAK) is required for interaction with PLG. An N6-acetyllysine modification is found at K406. At K420 the chain carries N6-acetyllysine; alternate. At K420 the chain carries N6-succinyllysine; alternate. K420 carries the N6-malonyllysine; alternate modification.

It belongs to the enolase family. In terms of assembly, mammalian enolase is composed of 3 isozyme subunits, alpha, beta and gamma, which can form homodimers or heterodimers which are cell-type and development-specific. ENO1 interacts with PLG in the neuronal plasma membrane and promotes its activation. The C-terminal lysine is required for this binding. Interacts with ENO4 and PGAM2. Interacts with CMTM6. Requires Mg(2+) as cofactor. In terms of processing, ISGylated. Lysine 2-hydroxyisobutyrylation (Khib) by p300/EP300 activates the phosphopyruvate hydratase activity.

It is found in the cytoplasm. Its subcellular location is the cell membrane. It carries out the reaction (2R)-2-phosphoglycerate = phosphoenolpyruvate + H2O. The protein operates within carbohydrate degradation; glycolysis; pyruvate from D-glyceraldehyde 3-phosphate: step 4/5. In terms of biological role, glycolytic enzyme the catalyzes the conversion of 2-phosphoglycerate to phosphoenolpyruvate. In addition to glycolysis, involved in various processes such as growth control, hypoxia tolerance and allergic responses. May also function in the intravascular and pericellular fibrinolytic system due to its ability to serve as a receptor and activator of plasminogen on the cell surface of several cell-types such as leukocytes and neurons. Stimulates immunoglobulin production. The protein is Alpha-enolase (ENO1) of Pongo abelii (Sumatran orangutan).